The sequence spans 313 residues: NADH-ubiquinone oxidoreductase chain 2 (313 aa).

The next 10 membrane-spanning stretches (helical) occupy residues 3–23 (IWII…FIFW), 47–67 (SMIT…ISSF), 81–101 (INIS…LIMI), 105–125 (LTFY…LLII), 128–148 (FMNS…SIMA), 153–173 (LIKQ…LCLI), 177–197 (MNFW…IIIN), 220–240 (NTMI…GFFM), 253–275 (LIFM…RILT), and 293–313 (KSNF…NIFF).

Belongs to the complex I subunit 2 family.

It is found in the mitochondrion inner membrane. It carries out the reaction a ubiquinone + NADH + 5 H(+)(in) = a ubiquinol + NAD(+) + 4 H(+)(out). Its function is as follows. Core subunit of the mitochondrial membrane respiratory chain NADH dehydrogenase (Complex I) that is believed to belong to the minimal assembly required for catalysis. Complex I functions in the transfer of electrons from NADH to the respiratory chain. The immediate electron acceptor for the enzyme is believed to be ubiquinone. The protein is NADH-ubiquinone oxidoreductase chain 2 (ND2) of Rhipicephalus sanguineus (Brown dog tick).